A 708-amino-acid chain; its full sequence is Prolyl 3-hydroxylase 2 (708 aa).

Residues 1–24 (MRERIWAPPLLLLLPLLLPPPLWG) form the signal peptide. TPR repeat units lie at residues 44–77 (FDLL…HRRL), 148–181 (RVPY…NPEH), 210–243 (HMES…YFVE), and 306–339 (PLHY…HPDD). Residues asparagine 449 and asparagine 549 are each glycosylated (N-linked (GlcNAc...) asparagine). In terms of domain architecture, Fe2OG dioxygenase spans 557 to 671 (THMVCRTALS…RCAVALWFTL (115 aa)). Fe cation is bound by residues histidine 580, aspartate 582, and histidine 652. Arginine 662 is a catalytic residue. Positions 705-708 (KDEL) match the Prevents secretion from ER motif.

The protein belongs to the leprecan family. Requires Fe cation as cofactor. It depends on L-ascorbate as a cofactor. In terms of tissue distribution, expression localized to the epithelia of bile ducts and to the sacroplasm of heart muscle and skeletal muscle. In the pancreas, localized to a subpopulation of Langerhans islet cells and in the salivary gland, expressed in acinar cells (at protein level). Expressed in adult heart, placenta, lung, liver, skeletal muscle and kidney. Detected in fetal heart, spleen, lung, liver skeletal muscle and kidney.

Its subcellular location is the endoplasmic reticulum. It is found in the sarcoplasmic reticulum. The protein resides in the golgi apparatus. The catalysed reaction is L-prolyl-[collagen] + 2-oxoglutarate + O2 = trans-3-hydroxy-L-prolyl-[collagen] + succinate + CO2. With respect to regulation, inhibited by pyridine 2,4-dicarboxylate, an analog of 2-oxoglutarate. In terms of biological role, prolyl 3-hydroxylase that catalyzes the post-translational formation of 3-hydroxyproline on collagens. Contributes to proline 3-hydroxylation of collagen COL4A1 and COL1A1 in tendons, the eye sclera and in the eye lens capsule. Has high activity with the type IV collagen COL4A1, and lower activity with COL1A1. Catalyzes hydroxylation of the first Pro in Gly-Pro-Hyp sequences where Hyp is 4-hydroxyproline. Has no activity on substrates that lack 4-hydroxyproline in the third position. This is Prolyl 3-hydroxylase 2 from Homo sapiens (Human).